The chain runs to 475 residues: Ankyrin repeat, SAM and basic leucine zipper domain-containing protein 1 (475 aa).

The tract at residues 1 to 24 is disordered; it reads MAGSLGNLVVAGGGESSDSEEDYW. Phosphoserine is present on residues serine 16, serine 17, and serine 19. ANK repeat units follow at residues 44–73, 77–106, 109–146, 147–176, 180–209, and 213–242; these read ERDETFKKALTSGDVSLVEELLNSGMSVES, FGWTPLMCAVNIANVELVRILLDRGANASF, DQYTILMAACAAHASESQILKTVELLLSRNANPNVACR, KCMTPVMYAAREGHAQVVALLVAHGAEINA, NGYTALTWAARHGHKSVVLKLLELGANKTI, and DGKTAGEIAKRNKHPELFTLLSLTVNPLQG. The region spanning 273–336 is the SAM domain; that stretch reads TAFGDLEVFL…LDAVKELQVE (64 aa).

Interacts with DDX4, PIWIL1, RANBP9 and TDRD1.

Its subcellular location is the cytoplasm. Plays a central role during spermatogenesis by repressing transposable elements and preventing their mobilization, which is essential for the germline integrity. Acts via the piRNA metabolic process, which mediates the repression of transposable elements during meiosis by forming complexes composed of piRNAs and Piwi proteins and governs the methylation and subsequent repression of transposons. Its association with pi-bodies suggests a participation in the primary piRNAs metabolic process. Required prior to the pachytene stage to facilitate the production of multiple types of piRNAs, including those associated with repeats involved in the regulation of retrotransposons. May act by mediating protein-protein interactions during germ cell maturation. The polypeptide is Ankyrin repeat, SAM and basic leucine zipper domain-containing protein 1 (ASZ1) (Notamacropus eugenii (Tammar wallaby)).